A 194-amino-acid polypeptide reads, in one-letter code: Peptide deformylase (194 aa).

The interval 71–93 (DAEPEECGHDHGDGEGAHKHYPV) is disordered. A compositionally biased stretch (basic and acidic residues) spans 76–93 (ECGHDHGDGEGAHKHYPV). Fe cation is bound by residues C119 and H161. E162 is a catalytic residue. Fe cation is bound at residue H165.

Belongs to the polypeptide deformylase family. Fe(2+) is required as a cofactor.

The catalysed reaction is N-terminal N-formyl-L-methionyl-[peptide] + H2O = N-terminal L-methionyl-[peptide] + formate. Its function is as follows. Removes the formyl group from the N-terminal Met of newly synthesized proteins. Requires at least a dipeptide for an efficient rate of reaction. N-terminal L-methionine is a prerequisite for activity but the enzyme has broad specificity at other positions. This is Peptide deformylase from Erythrobacter litoralis (strain HTCC2594).